Reading from the N-terminus, the 1366-residue chain is DNA-directed RNA polymerase subunit beta (1366 aa).

This sequence belongs to the RNA polymerase beta chain family. The RNAP catalytic core consists of 2 alpha, 1 beta, 1 beta' and 1 omega subunit. When a sigma factor is associated with the core the holoenzyme is formed, which can initiate transcription.

The catalysed reaction is RNA(n) + a ribonucleoside 5'-triphosphate = RNA(n+1) + diphosphate. Its function is as follows. DNA-dependent RNA polymerase catalyzes the transcription of DNA into RNA using the four ribonucleoside triphosphates as substrates. The chain is DNA-directed RNA polymerase subunit beta from Marinomonas sp. (strain MWYL1).